The sequence spans 186 residues: Interferon beta-3 (186 aa).

The N-terminal stretch at 1–21 (MTYRCLLPMVLLLCFSTTALS) is a signal peptide. Residues cysteine 52 and cysteine 161 are joined by a disulfide bond. N-linked (GlcNAc...) asparagine glycans are attached at residues asparagine 131 and asparagine 173.

The protein belongs to the alpha/beta interferon family. Monomer.

Its subcellular location is the secreted. In terms of biological role, has antiviral, antibacterial and anticancer activities. The sequence is that of Interferon beta-3 (IFNB3) from Bos taurus (Bovine).